An 86-amino-acid chain; its full sequence is Diphthamide biosynthesis protein 3 (86 aa).

The 57-residue stretch at 4–60 (YHDEVEIEDFEYDEEEEMYYYPCPCGDRFQISKEELIEGEEVATCPSCSLVIKVIYD) folds into the DPH-type MB domain. Cys-26, Cys-28, Cys-48, and Cys-51 together coordinate Fe cation.

Belongs to the DPH3 family. Component of the 2-(3-amino-3-carboxypropyl)histidine synthase complex composed of Dph1, Dph2, Dph3 and a NADH-dependent reductase. It depends on Fe(2+) as a cofactor.

The catalysed reaction is [3Fe-4S](1+)-[protein] + Fe(2+)-[Dph3] = [3Fe-4S](0)-[protein] + Fe(3+)-[Dph3]. It catalyses the reaction 2 [3Fe-4S](0)-[protein] + 2 Fe(2+)-[Dph3] + NADH = 2 [4Fe-4S](1+)-[protein] + 2 [Dph3] + NAD(+) + H(+). It functions in the pathway protein modification; peptidyl-diphthamide biosynthesis. Required for the first step of diphthamide biosynthesis, a post-translational modification of histidine which occurs in elongation factor 2. Dph1 and Dph2 transfer a 3-amino-3-carboxypropyl (ACP) group from S-adenosyl-L-methionine (SAM) to a histidine residue, the reaction is assisted by a reduction system comprising Dph3 and a NADH-dependent reductase. Acts as an electron donor to reduce the Fe-S cluster in Dph1-Dph2 keeping the [4Fe-4S] clusters in the active and reduced state. Restores iron to Dph1-Dph2 iron-sulfur clusters which have degraded from [4Fe-4S] to [3Fe-4S] by donating an iron atom to reform [4Fe-4S] clusters, in a manner dependent on the presence of elongation factor 2 and SAM. Associates with the elongator complex and is required for tRNA Wobble base modifications mediated by the elongator complex. The elongator complex is required for multiple tRNA modifications, including mcm5U (5-methoxycarbonylmethyl uridine), mcm5s 2U (5-methoxycarbonylmethyl-2-thiouridine), and ncm5U (5-carbamoylmethyl uridine). This Drosophila melanogaster (Fruit fly) protein is Diphthamide biosynthesis protein 3.